We begin with the raw amino-acid sequence, 226 residues long: Large ribosomal subunit protein uL1 (226 aa).

Belongs to the universal ribosomal protein uL1 family. Part of the 50S ribosomal subunit.

Its function is as follows. Binds directly to 23S rRNA. The L1 stalk is quite mobile in the ribosome, and is involved in E site tRNA release. Functionally, protein L1 is also a translational repressor protein, it controls the translation of the L11 operon by binding to its mRNA. The chain is Large ribosomal subunit protein uL1 from Mycoplasma genitalium (strain ATCC 33530 / DSM 19775 / NCTC 10195 / G37) (Mycoplasmoides genitalium).